The following is a 275-amino-acid chain: 4-hydroxy-3-methylbut-2-enyl diphosphate reductase (275 aa).

Residue Cys-12 coordinates [4Fe-4S] cluster. Residues His-40 and His-70 each coordinate (2E)-4-hydroxy-3-methylbut-2-enyl diphosphate. Dimethylallyl diphosphate-binding residues include His-40 and His-70. Isopentenyl diphosphate is bound by residues His-40 and His-70. A [4Fe-4S] cluster-binding site is contributed by Cys-92. Residue His-119 coordinates (2E)-4-hydroxy-3-methylbut-2-enyl diphosphate. His-119 is a dimethylallyl diphosphate binding site. His-119 is an isopentenyl diphosphate binding site. The active-site Proton donor is the Glu-121. (2E)-4-hydroxy-3-methylbut-2-enyl diphosphate is bound at residue Thr-151. Cys-181 is a binding site for [4Fe-4S] cluster. Ser-209, Ser-210, Asn-211, and Ser-251 together coordinate (2E)-4-hydroxy-3-methylbut-2-enyl diphosphate. Positions 209, 210, 211, and 251 each coordinate dimethylallyl diphosphate. Isopentenyl diphosphate-binding residues include Ser-209, Ser-210, Asn-211, and Ser-251.

This sequence belongs to the IspH family. It depends on [4Fe-4S] cluster as a cofactor.

It catalyses the reaction isopentenyl diphosphate + 2 oxidized [2Fe-2S]-[ferredoxin] + H2O = (2E)-4-hydroxy-3-methylbut-2-enyl diphosphate + 2 reduced [2Fe-2S]-[ferredoxin] + 2 H(+). It carries out the reaction dimethylallyl diphosphate + 2 oxidized [2Fe-2S]-[ferredoxin] + H2O = (2E)-4-hydroxy-3-methylbut-2-enyl diphosphate + 2 reduced [2Fe-2S]-[ferredoxin] + 2 H(+). The protein operates within isoprenoid biosynthesis; dimethylallyl diphosphate biosynthesis; dimethylallyl diphosphate from (2E)-4-hydroxy-3-methylbutenyl diphosphate: step 1/1. It functions in the pathway isoprenoid biosynthesis; isopentenyl diphosphate biosynthesis via DXP pathway; isopentenyl diphosphate from 1-deoxy-D-xylulose 5-phosphate: step 6/6. Its function is as follows. Catalyzes the conversion of 1-hydroxy-2-methyl-2-(E)-butenyl 4-diphosphate (HMBPP) into a mixture of isopentenyl diphosphate (IPP) and dimethylallyl diphosphate (DMAPP). Acts in the terminal step of the DOXP/MEP pathway for isoprenoid precursor biosynthesis. The protein is 4-hydroxy-3-methylbut-2-enyl diphosphate reductase of Thermotoga petrophila (strain ATCC BAA-488 / DSM 13995 / JCM 10881 / RKU-1).